The following is a 155-amino-acid chain: Ribosomal RNA large subunit methyltransferase H (155 aa).

S-adenosyl-L-methionine contacts are provided by residues L73, G104, and 123 to 128 (LSPLTL).

It belongs to the RNA methyltransferase RlmH family. In terms of assembly, homodimer.

It localises to the cytoplasm. It carries out the reaction pseudouridine(1915) in 23S rRNA + S-adenosyl-L-methionine = N(3)-methylpseudouridine(1915) in 23S rRNA + S-adenosyl-L-homocysteine + H(+). Functionally, specifically methylates the pseudouridine at position 1915 (m3Psi1915) in 23S rRNA. The chain is Ribosomal RNA large subunit methyltransferase H from Pseudomonas putida (strain W619).